Reading from the N-terminus, the 199-residue chain is Signal peptidase complex subunit 2 (199 aa).

At 1–49 the chain is on the cytoplasmic side; sequence MGKKDEKSQQGEELVKVNKWDGSAVKHALDDAVKTCLLGDRPQLKEQFG. Residues 50 to 72 traverse the membrane as a helical segment; it reads LVNTRLALCALAVSVAIMAHAWD. Over 73–81 the chain is Lumenal; it reads FTHPFPESR. The chain crosses the membrane as a helical span at residues 82 to 104; the sequence is PVLLFSVLAYFALLGILTLHSSF. The Cytoplasmic segment spans residues 105–199; that stretch reads REKGTFAVAL…KKNASSLSSN (95 aa).

It belongs to the SPCS2 family. As to quaternary structure, component of the signal peptidase complex (SPC) composed of a catalytic subunit twr/SEC11 and three accessory subunits Spase12/SPCS1, Spase25/SPCS2 and Spase22-23/SPCS3. The complex induces a local thinning of the ER membrane which is used to measure the length of the signal peptide (SP) h-region of protein substrates. This ensures the selectivity of the complex towards h-regions shorter than 18-20 amino acids.

The protein localises to the endoplasmic reticulum membrane. In terms of biological role, component of the signal peptidase complex (SPC) which catalyzes the cleavage of N-terminal signal sequences from nascent proteins as they are translocated into the lumen of the endoplasmic reticulum. Enhances the enzymatic activity of SPC and facilitates the interactions between different components of the translocation site. The polypeptide is Signal peptidase complex subunit 2 (Spase25) (Drosophila melanogaster (Fruit fly)).